A 235-amino-acid chain; its full sequence is Transmembrane protein 176A (235 aa).

Residue serine 38 is modified to Phosphoserine. 4 helical membrane-spanning segments follow: residues valine 55–phenylalanine 75, serine 86–tyrosine 106, tyrosine 113–leucine 133, and alanine 193–tyrosine 213.

It belongs to the TMEM176 family. As to quaternary structure, interacts with MCOLN2.

Its subcellular location is the membrane. The chain is Transmembrane protein 176A (TMEM176A) from Homo sapiens (Human).